The chain runs to 296 residues: MEINGTVIEDTFSEAFTGRCVRATITARDMETVRRAAYDSTATPGAVIGRVEGGVESFHSADETPDGRPGATVQFYYALPDLEKFQVELSYRIRQDILVKPFTALYNSTPDPEGYMDMMKHVGHCGDGYEWIEEFGGREMINIPIAVPDFKIESKMGYRDAIMGANFWYMCRDPETVLEAGRAAINAIGEVEGVVTPFDICSAASKPETNYPWIGPTTNHPYCPSLRDLLGDKSKVPEGVGYIPEIVINGLSLEALEEAMRAGIETVCRYDGVLMVSAGNYDGKLGDHRIDLHGVL.

Belongs to the FTR family.

The sequence is that of Formylmethanofuran--tetrahydromethanopterin formyltransferase-like protein (ehaS) from Methanothermobacter marburgensis (strain ATCC BAA-927 / DSM 2133 / JCM 14651 / NBRC 100331 / OCM 82 / Marburg) (Methanobacterium thermoautotrophicum).